We begin with the raw amino-acid sequence, 745 residues long: Pentatricopeptide repeat-containing protein At1g71420 (745 aa).

13 PPR repeats span residues 58–88 (SQQA…MLSH), 95–125 (NVIL…MPER), 126–160 (NVVS…CFPN), 191–224 (SIYV…IKFK), 225–259 (NLVT…GVGF), 260–296 (DRAT…TVKS), 301–332 (QTEV…MSHC), 334–367 (DIVA…KLSP), 368–402 (DWYT…GFLA), 403–437 (DTVL…DVVS), 438–464 (WNSM…MDIN), 466–496 (DSAT…MFEK), and 502–532 (QLNH…MPMD). The interval 537–613 (VWIALLGSCR…EPDLSWTEIG (77 aa)) is type E motif. The type E(+) motif stretch occupies residues 614–644 (NKVHEFASGGRHRPDKEAVYRELKRLISWLK). The type DYW motif stretch occupies residues 645–745 (EMGYVPEMRS…DSSCSCNDYW (101 aa)).

The protein belongs to the PPR family. PCMP-H subfamily.

The chain is Pentatricopeptide repeat-containing protein At1g71420 (PCMP-H70) from Arabidopsis thaliana (Mouse-ear cress).